A 363-amino-acid polypeptide reads, in one-letter code: Type 3 secretion system translocon protein SctB (363 aa).

Positions 1–16 (MEIQNTKPTQTLYTDI) are enriched in polar residues. A disordered region spans residues 1 to 30 (MEIQNTKPTQTLYTDISTKQTQSSSETQKS). Residues 17–30 (STKQTQSSSETQKS) show a composition bias toward low complexity. The segment at 33 to 73 (YQQIAAHIPLNVGKNPVLTTTLNDDQLLKLSEQVQHDSEII) is ipgC chaperone binding domain. A helical membrane pass occupies residues 99–120 (ISSLSSNAVSLIISVAVLLSAL).

This sequence belongs to the SctB/SipC family. In terms of assembly, the core secretion machinery of the T3SS is composed of approximately 20 different proteins, including cytoplasmic components, a base, an export apparatus and a needle. This subunit is involved in the formation of a pore, called the translocon, in host membrane. Interacts with IpaB/SctE. Interacts with the molecular chaperone IpgC, which prevents premature association with IpaB/SctE within the cytoplasm of Shigella cells. Does not interact with CDC42 or RAC1 GTPases in vitro.

Its subcellular location is the secreted. It localises to the host membrane. Interaction with the membrane is affected by the pH. Its function is as follows. Component of the type III secretion system (T3SS), also called injectisome, which is used to inject bacterial effector proteins into eukaryotic host cells. IpaB/SctE and IpaC/SctB are inserted into the host membrane where they form a pore and allow the translocation of effector proteins into the cytosol of target cells. Induction and secretion of IpaC/SctB comprise the final step in triggering the induction of full type III secretion. Functionally, required for efficient dissemination. Necessary for lysis of the two cellular membranes that surround bacteria in protrusions during cell-to-cell spread. Contribute to actin nucleation in vitro, which may be a necessary step in Shigella invasion. This Shigella flexneri protein is Type 3 secretion system translocon protein SctB.